Here is a 254-residue protein sequence, read N- to C-terminus: Dihydroorotate dehydrogenase B (NAD(+)), electron transfer subunit (254 aa).

Residues 1-99 form the FAD-binding FR-type domain; sequence MLQTEMKVIQ…LGPLGKGFDI (99 aa). Residues 50–53, 67–69, and 74–75 each bind FAD; these read RPIS, LYR, and GT. [2Fe-2S] cluster-binding residues include C218, C223, C226, and C241.

The protein belongs to the PyrK family. In terms of assembly, heterotetramer of 2 PyrK and 2 PyrD type B subunits. [2Fe-2S] cluster serves as cofactor. It depends on FAD as a cofactor.

It functions in the pathway pyrimidine metabolism; UMP biosynthesis via de novo pathway; orotate from (S)-dihydroorotate (NAD(+) route): step 1/1. In terms of biological role, responsible for channeling the electrons from the oxidation of dihydroorotate from the FMN redox center in the PyrD type B subunit to the ultimate electron acceptor NAD(+). In Listeria monocytogenes serotype 4b (strain F2365), this protein is Dihydroorotate dehydrogenase B (NAD(+)), electron transfer subunit.